The following is a 190-amino-acid chain: Orotate phosphoribosyltransferase (190 aa).

114–122 (EDVVTTGGS) lines the 5-phospho-alpha-D-ribose 1-diphosphate pocket. 2 residues coordinate orotate: T118 and R146.

The protein belongs to the purine/pyrimidine phosphoribosyltransferase family. PyrE subfamily. In terms of assembly, homodimer. Mg(2+) serves as cofactor.

The enzyme catalyses orotidine 5'-phosphate + diphosphate = orotate + 5-phospho-alpha-D-ribose 1-diphosphate. It participates in pyrimidine metabolism; UMP biosynthesis via de novo pathway; UMP from orotate: step 1/2. Its function is as follows. Catalyzes the transfer of a ribosyl phosphate group from 5-phosphoribose 1-diphosphate to orotate, leading to the formation of orotidine monophosphate (OMP). The sequence is that of Orotate phosphoribosyltransferase from Thermoanaerobacter sp. (strain X514).